Here is a 98-residue protein sequence, read N- to C-terminus: Small ribosomal subunit protein bS20 (98 aa).

The protein belongs to the bacterial ribosomal protein bS20 family.

Functionally, binds directly to 16S ribosomal RNA. This is Small ribosomal subunit protein bS20 from Synechococcus elongatus (strain ATCC 33912 / PCC 7942 / FACHB-805) (Anacystis nidulans R2).